Reading from the N-terminus, the 456-residue chain is Divalent metal cation transporter MntH (456 aa).

11 consecutive transmembrane segments (helical) span residues 47–67, 77–97, 123–143, 151–171, 184–204, 227–247, 276–296, 316–336, 369–389, 392–412, and 422–442; these read ALSFFGPGYLVAVGYMDPGNW, FGYALLSVVLLSNLMAVLLQA, AWPLWLLAELAICATDLAEVI, LLFGIPLEIGVILTAVDVLLV, ALIITLLGVIALCFLTQIIMA, MLYIALGIIGATVMPHNLYLH, IALTFALVINASILILAAASF, PLLGSAIAPALFAIALLCCGL, FVAIVPAAIVTILYGSQGTTE, ILSQVVLSLQLPFAVIPLVIF, and LAAAPWVTFLAAITAAIIVVL.

This sequence belongs to the NRAMP family.

The protein localises to the cell inner membrane. Its function is as follows. H(+)-stimulated, divalent metal cation uptake system. This Brucella suis biovar 1 (strain 1330) protein is Divalent metal cation transporter MntH.